Here is a 724-residue protein sequence, read N- to C-terminus: MVMQEEKKRQQPVTRRVRSFSESFKNLFRPPRSRDSSPINVTRIPYRSSSTSPKRSSEPPRRSTVSAQILDPKNSPIRQRSYTLKCCTPGLSHPFRQTGSGASNSPTRHRSISGEEQEIVNSLPEYKRSASHTFHGIRRPRSRSSSVSSCDSSNGTTSSSDSQWAMDSLLDDSDNDLTPYRGSNKDILKSKDRAPYNYIDDYNKKALRRATSYPNPLPSKQFYNERLYTRRSHPDEESLESLPRFAGADVQCIIEQNGFKVYEDGSHEHNIKLSGVIAKLEKGNSLPAHRQGSLSRPRLGITLSGLFKHHKNECDIENALSLLPNVEKSQTNHEKRTGQSPNDSNRSSPTQGREDYLKIVNPDASLGSDELKLINSLSSRIHKSLQNYLQEKNLKPAECIGEQAPTFQDNYGHPVGLVGAGAYGEVKLCARLRNEKDSPPFETYHDSKYIYYAVKELKPKPDSDLEKFCTKITSEFIIGHSLSHYHKNGKKPAPNILNVFDILEDSSSFIEVMEFCPAGDLYGMLVGKSKLKGRLHPLEADCFMKQLLHGVKFMHDHGIAHCDLKPENILFYPHGLLKICDFGTSSVFQTAWERRVHAQKGIIGSEPYVAPEEFVDGEYYDPRLIDCWSCGVVYITMILGHYLWKVASREKDMSYDEFYKEMQRKNQFRVFEELKHVNSELATNRKIALYRIFQWEPRKRISVGKLLDMQWMKSTNCCLIYDST.

Disordered regions lie at residues 1–81 and 93–188; these read MVMQ…RQRS and HPFR…KDIL. A Phosphoserine modification is found at Ser19. Residues 45–54 show a composition bias toward low complexity; the sequence is PYRSSSTSPK. A compositionally biased stretch (polar residues) spans 95-106; sequence FRQTGSGASNSP. Positions 143 to 162 are enriched in low complexity; it reads RSSSVSSCDSSNGTTSSSDS. 3 positions are modified to phosphoserine: Ser232, Ser238, and Ser241. The interval 329-355 is disordered; that stretch reads SQTNHEKRTGQSPNDSNRSSPTQGRED. The segment covering 338 to 351 has biased composition (polar residues); the sequence is GQSPNDSNRSSPTQ. A Protein kinase domain is found at 412-712; that stretch reads GHPVGLVGAG…VGKLLDMQWM (301 aa). Residues 418-426 and Lys455 each bind ATP; that span reads VGAGAYGEV. Asp563 functions as the Proton acceptor in the catalytic mechanism.

The protein belongs to the protein kinase superfamily. CAMK Ser/Thr protein kinase family. NPR/HAL subfamily. HAL5 sub-subfamily.

It is found in the cytoplasm. The catalysed reaction is L-seryl-[protein] + ATP = O-phospho-L-seryl-[protein] + ADP + H(+). The enzyme catalyses L-threonyl-[protein] + ATP = O-phospho-L-threonyl-[protein] + ADP + H(+). This Saccharomyces cerevisiae (strain ATCC 204508 / S288c) (Baker's yeast) protein is Probable serine/threonine-protein kinase KKQ8 (KKQ8).